The following is a 718-amino-acid chain: Peroxisomal bifunctional enzyme (718 aa).

Positions Ala-2–Thr-280 are enoyl-CoA hydratase / isomerase. Gly-100 is a binding site for substrate. The tract at residues Leu-281 to Gly-567 is 3-hydroxyacyl-CoA dehydrogenase. The Microbody targeting signal signature appears at Ser-716–Leu-718.

The protein in the N-terminal section; belongs to the enoyl-CoA hydratase/isomerase family. In the C-terminal section; belongs to the 3-hydroxyacyl-CoA dehydrogenase family. As to quaternary structure, monomer.

It localises to the peroxisome. The enzyme catalyses a (3S)-3-hydroxyacyl-CoA = a (2E)-enoyl-CoA + H2O. It catalyses the reaction a 4-saturated-(3S)-3-hydroxyacyl-CoA = a (3E)-enoyl-CoA + H2O. The catalysed reaction is a (3Z)-enoyl-CoA = a 4-saturated (2E)-enoyl-CoA. It carries out the reaction a (3E)-enoyl-CoA = a 4-saturated (2E)-enoyl-CoA. The enzyme catalyses a (3S)-3-hydroxyacyl-CoA + NAD(+) = a 3-oxoacyl-CoA + NADH + H(+). It catalyses the reaction (2S,3S)-3-hydroxy-2-methylbutanoyl-CoA = (2E)-2-methylbut-2-enoyl-CoA + H2O. The catalysed reaction is (3S)-hydroxyhexadecanoyl-CoA + NAD(+) = 3-oxohexadecanoyl-CoA + NADH + H(+). It carries out the reaction (3S)-hydroxyhexadecanoyl-CoA = (2E)-hexadecenoyl-CoA + H2O. The enzyme catalyses (2E)-hexadecenedioyl-CoA + H2O = (3S)-hydroxyhexadecanedioyl-CoA. It catalyses the reaction (3S)-hydroxyhexadecanedioyl-CoA + NAD(+) = 3-oxohexadecanedioyl-CoA + NADH + H(+). The catalysed reaction is (3E,5Z)-tetradecadienoyl-CoA = (2E,5Z)-tetradecadienoyl-CoA. It carries out the reaction (3E,5Z)-octadienoyl-CoA = (2E,5Z)-octadienoyl-CoA. The enzyme catalyses (3S)-hydroxydecanoyl-CoA + NAD(+) = 3-oxodecanoyl-CoA + NADH + H(+). It catalyses the reaction (3E)-decenoyl-CoA = (2E)-decenoyl-CoA. The catalysed reaction is (3Z)-hexenoyl-CoA = (2E)-hexenoyl-CoA. It carries out the reaction (3E)-hexenoyl-CoA = (2E)-hexenoyl-CoA. The enzyme catalyses (3S)-hydroxydecanoyl-CoA = (2E)-decenoyl-CoA + H2O. It catalyses the reaction (3S)-hydroxyhexanoyl-CoA = (2E)-hexenoyl-CoA + H2O. Its pathway is lipid metabolism; fatty acid beta-oxidation. Peroxisomal trifunctional enzyme possessing 2-enoyl-CoA hydratase, 3-hydroxyacyl-CoA dehydrogenase, and delta 3, delta 2-enoyl-CoA isomerase activities. Catalyzes two of the four reactions of the long straight chain fatty acids peroxisomal beta-oxidation pathway. Can also use branched-chain fatty acids such as 2-methyl-2E-butenoyl-CoA as a substrate, which is hydrated into (2S,3S)-3-hydroxy-2-methylbutanoyl-CoA. Optimal isomerase for 2,5 double bonds into 3,5 form isomerization in a range of enoyl-CoA species. Also able to isomerize both 3-cis and 3-trans double bonds into the 2-trans form in a range of enoyl-CoA species. Regulates the amount of medium-chain dicarboxylic fatty acids which are essential regulators of all fatty acid oxidation pathways. Also involved in the degradation of long-chain dicarboxylic acids through peroxisomal beta-oxidation. This chain is Peroxisomal bifunctional enzyme (ehhadh), found in Danio rerio (Zebrafish).